We begin with the raw amino-acid sequence, 545 residues long: Thermosome subunit (545 aa).

Belongs to the TCP-1 chaperonin family. In terms of assembly, forms an oligomeric complex of eight-membered rings.

Functionally, molecular chaperone; binds unfolded polypeptides in vitro, and has a weak ATPase activity. The chain is Thermosome subunit (ths) from Methanopyrus kandleri (strain AV19 / DSM 6324 / JCM 9639 / NBRC 100938).